The chain runs to 179 residues: Translation initiation factor IF-3 (179 aa).

This sequence belongs to the IF-3 family. As to quaternary structure, monomer.

The protein resides in the cytoplasm. Functionally, IF-3 binds to the 30S ribosomal subunit and shifts the equilibrium between 70S ribosomes and their 50S and 30S subunits in favor of the free subunits, thus enhancing the availability of 30S subunits on which protein synthesis initiation begins. This Buchnera aphidicola subsp. Acyrthosiphon pisum (strain APS) (Acyrthosiphon pisum symbiotic bacterium) protein is Translation initiation factor IF-3.